Consider the following 198-residue polypeptide: Recombination protein RecR (198 aa).

The C4-type zinc-finger motif lies at 58–73 (CSICGNFTDSDPCAIC). The 95-residue stretch at 81–175 (SIICVIEEPK…KVTRIAHGIP (95 aa)) folds into the Toprim domain.

This sequence belongs to the RecR family.

May play a role in DNA repair. It seems to be involved in an RecBC-independent recombinational process of DNA repair. It may act with RecF and RecO. This chain is Recombination protein RecR, found in Clostridium kluyveri (strain NBRC 12016).